We begin with the raw amino-acid sequence, 339 residues long: DNA-directed RNA polymerase subunit alpha (339 aa).

The segment at 1–233 (MVREEVAGST…DLFLPFLHAE (233 aa)) is alpha N-terminal domain (alpha-NTD). The segment at 264 to 339 (KKGIPLNCIF…IDLLKNKLSF (76 aa)) is alpha C-terminal domain (alpha-CTD).

It belongs to the RNA polymerase alpha chain family. In terms of assembly, in plastids the minimal PEP RNA polymerase catalytic core is composed of four subunits: alpha, beta, beta', and beta''. When a (nuclear-encoded) sigma factor is associated with the core the holoenzyme is formed, which can initiate transcription.

Its subcellular location is the plastid. The protein resides in the chloroplast. The enzyme catalyses RNA(n) + a ribonucleoside 5'-triphosphate = RNA(n+1) + diphosphate. Functionally, DNA-dependent RNA polymerase catalyzes the transcription of DNA into RNA using the four ribonucleoside triphosphates as substrates. The protein is DNA-directed RNA polymerase subunit alpha of Elymus californicus (California bottlebrush grass).